The following is a 327-amino-acid chain: Methionyl-tRNA formyltransferase (327 aa).

113–116 (SILP) is a binding site for (6S)-5,6,7,8-tetrahydrofolate.

Belongs to the Fmt family.

The catalysed reaction is L-methionyl-tRNA(fMet) + (6R)-10-formyltetrahydrofolate = N-formyl-L-methionyl-tRNA(fMet) + (6S)-5,6,7,8-tetrahydrofolate + H(+). Functionally, attaches a formyl group to the free amino group of methionyl-tRNA(fMet). The formyl group appears to play a dual role in the initiator identity of N-formylmethionyl-tRNA by promoting its recognition by IF2 and preventing the misappropriation of this tRNA by the elongation apparatus. The polypeptide is Methionyl-tRNA formyltransferase (Colwellia psychrerythraea (strain 34H / ATCC BAA-681) (Vibrio psychroerythus)).